The chain runs to 878 residues: Serine/threonine-protein kinase N3 (878 aa).

3 consecutive REM-1 domains span residues 2–77, 86–165, and 169–238; these read EHRK…QVLL, SEPQ…SGSP, and PDLL…RLPP. At serine 164 the chain carries Phosphoserine. The disordered stretch occupies residues 461–525; that stretch reads PNTASPPKGR…TPCTKRPHMD (65 aa). Residues 548 to 807 enclose the Protein kinase domain; the sequence is FRCLAVLGRG…AEEIKVQPFF (260 aa). ATP-binding positions include 554–562 and lysine 577; that span reads LGRGHFGKV. Residue aspartate 673 is the Proton acceptor of the active site. 3 positions are modified to phosphothreonine: threonine 707, threonine 711, and threonine 849. One can recognise an AGC-kinase C-terminal domain in the interval 808 to 878; it reads RTTNWQALLA…DFVSEQFLES (71 aa).

It belongs to the protein kinase superfamily. AGC Ser/Thr protein kinase family. PKC subfamily. Autophosphorylated.

The protein localises to the nucleus. It is found in the cytoplasm. It localises to the perinuclear region. It carries out the reaction L-seryl-[protein] + ATP = O-phospho-L-seryl-[protein] + ADP + H(+). It catalyses the reaction L-threonyl-[protein] + ATP = O-phospho-L-threonyl-[protein] + ADP + H(+). Its activity is regulated as follows. Two specific sites, Thr-707 (activation loop of the kinase domain) and Thr-849 (turn motif), need to be phosphorylated for its full activation. Functionally, contributes to invasiveness in malignant prostate cancer. This Mus musculus (Mouse) protein is Serine/threonine-protein kinase N3 (Pkn3).